The chain runs to 219 residues: MKITWHGHAFIEIQVAGKQILIDPFITGNPFTKTKPEDLNPDYILLTHSHRDHVGDTEELAKKSGATIVTEMDMVNDYAQKGFKVEGPNYGGTVHFDWGDVKIIPAWHTTANVPLGMATGLALTIEGKLIYIAGDTGLFSDMKLVGRKQQIDLAFLPIGDYYTMGPDDAAYAASLIEAKKVIPDHFNTFPPIKQDVNDFWKDVPENMKFTAEIDKPFEL.

The protein belongs to the UPF0173 family.

This is UPF0173 metal-dependent hydrolase LSL_0324 from Ligilactobacillus salivarius (strain UCC118) (Lactobacillus salivarius).